Here is a 1034-residue protein sequence, read N- to C-terminus: MHQKIVECIPLWSRNLNSNVKGMRGEGIACLLIVLCSIIYRTEAQRIETNFNNNWHFILKDSPDFSKENLDDSSWELLNVPHDWSFEKGVRKGGDQGQGGGYHDGGIGWYRKTFSFSKASLSKTTYINFDGVYMNSEVWINGNRLGKRPYGYISFRYDISKYLKVGKNTIAVRVDNGLEPSARWYHSCGIYAPVKLVEVNPTHFKPNTIFIKTPSIEKQQGVVSIDAEIKGAFKGLKYNVELLTANGKVIATHSEKLASAQPSVQLEVKPPKLWSPESPNLYKAKTQILDGKKVIDEKTTTFGFRTVAWKTETGFWLNGENVKLKGVCEHWEGGPVGGAWTKPMLRWKLQSLKDMGINAIRPSHNSTPPMFYDICDEIGLLVMDEIFDGWHKKAPEDYGKQAFDEWWQADVKEWITRDRNHPSIFVWSLGNETHSDVAPEMVAFGKNLDPTRLFTSGAGNPEDMDIQGVNGGSETKSFIENNKLTKPFISTEAPHTWQTRGYYRTQTWWRDNELSGTYELPNLTEKEVFFYEGINPKNWKNRKQRFNSSYDNATVRVSARKYWEVMRDTPWHSGHFRWTGFDYYGEAGLVHGGLPFNLFMGGALDVAGFKKDLYYFYQSQWTEKPMIHMLPHWTHPRMKKGTVIPVWVYANADEVELFLNGISLGKDKPGTVWNEMQCEWLVPYEEGTLEAVGYINGKVVNRTSFSTAQQPSKLKTSILKLDAEGSFTDSFIVTSESLDTAGHLYPYGENKVYYHIQGDVKKISMENGNPIDPTSRTKSDFRALFFGKTRTFLRALPEPKEAAVVTAAILGDKALYTSNLITIDAQHIQLLGKSKTSDLEIRYTTNGENPETHGKLYKDAFMVEDDTTVKAIVKQNGKTVLSMEETFGKNEGLFWGDEHSADMWIGRGVDISAEEGVLTGAAKPSREAHRFKGSGFVDFKGGEGSITWYQENDGEPGDYSIRFRYMHNNHGKLHPMKLYVNDEYVRTIEFEPTGGWEKEWKFVPTIIVLQSGANNIKLETTGESGPFIDELFID.

The active-site Proton donor is the glutamate 432. Positions 909 to 1034 (VDISAEEGVL…GPFIDELFID (126 aa)) constitute a CBM6 domain.

Belongs to the glycosyl hydrolase 2 family.

The protein localises to the cytoplasm. It catalyses the reaction a beta-D-glucuronoside + H2O = D-glucuronate + an alcohol. In terms of biological role, glycoside hydrolase that may be involved in ulvan degradation. Ulvan is the main polysaccharide component of the Ulvales (green seaweed) cell wall. It is composed of disaccharide building blocks comprising 3-sulfated rhamnose (Rha3S) linked to D-glucuronic acid (GlcA), L-iduronic acid (IduA), or D-xylose (Xyl). This chain is Putative beta-glucuronidase, found in Formosa agariphila (strain DSM 15362 / KCTC 12365 / LMG 23005 / KMM 3901 / M-2Alg 35-1).